We begin with the raw amino-acid sequence, 245 residues long: Adenosylcobinamide-GDP ribazoletransferase (245 aa).

The next 6 membrane-spanning stretches (helical) occupy residues 35–55 (WFPL…ALGL), 108–128 (IGAF…IGAH), 137–157 (GVLI…AALV), 176–196 (IAIG…TPVM), 197–217 (TTVT…HLAR), and 222–242 (INGD…LLAA).

This sequence belongs to the CobS family. It depends on Mg(2+) as a cofactor.

It is found in the cell inner membrane. The enzyme catalyses alpha-ribazole + adenosylcob(III)inamide-GDP = adenosylcob(III)alamin + GMP + H(+). It catalyses the reaction alpha-ribazole 5'-phosphate + adenosylcob(III)inamide-GDP = adenosylcob(III)alamin 5'-phosphate + GMP + H(+). The protein operates within cofactor biosynthesis; adenosylcobalamin biosynthesis; adenosylcobalamin from cob(II)yrinate a,c-diamide: step 7/7. Its function is as follows. Joins adenosylcobinamide-GDP and alpha-ribazole to generate adenosylcobalamin (Ado-cobalamin). Also synthesizes adenosylcobalamin 5'-phosphate from adenosylcobinamide-GDP and alpha-ribazole 5'-phosphate. The polypeptide is Adenosylcobinamide-GDP ribazoletransferase (Nitratidesulfovibrio vulgaris (strain DP4) (Desulfovibrio vulgaris)).